Here is an 81-residue protein sequence, read N- to C-terminus: Short neurotoxin 2 (81 aa).

The signal sequence occupies residues 1-21; the sequence is MKTLLLTLVVVTIVCLDLGYT. 4 disulfides stabilise this stretch: Cys24/Cys43, Cys38/Cys60, Cys62/Cys73, and Cys74/Cys79.

This sequence belongs to the three-finger toxin family. Short-chain subfamily. Type I alpha-neurotoxin sub-subfamily. Expressed by the venom gland.

It is found in the secreted. Its function is as follows. Binds to muscle nicotinic acetylcholine receptor (nAChR) and inhibit acetylcholine from binding to the receptor, thereby impairing neuromuscular transmission. The sequence is that of Short neurotoxin 2 from Tropidechis carinatus (Australian rough-scaled snake).